The chain runs to 109 residues: Class I hydrophobin 18 (109 aa).

An N-terminal signal peptide occupies residues 1 to 20 (MFTEQVLNVIILLQTATVTA). 4 disulfides stabilise this stretch: Cys-28-Cys-88, Cys-35-Cys-82, Cys-36-Cys-69, and Cys-89-Cys-102. N-linked (GlcNAc...) asparagine glycans are attached at residues Asn-91 and Asn-106.

The protein belongs to the fungal hydrophobin family. Self-assembles to form functional amyloid fibrils called rodlets. Self-assembly into fibrillar rodlets occurs spontaneously at hydrophobic:hydrophilic interfaces and the rodlets further associate laterally to form amphipathic monolayers.

It is found in the secreted. The protein resides in the cell wall. Its function is as follows. Aerial growth, conidiation, and dispersal of filamentous fungi in the environment rely upon a capability of their secreting small amphipathic proteins called hydrophobins (HPBs) with low sequence identity. Class I can self-assemble into an outermost layer of rodlet bundles on aerial cell surfaces, conferring cellular hydrophobicity that supports fungal growth, development and dispersal; whereas Class II form highly ordered films at water-air interfaces through intermolecular interactions but contribute nothing to the rodlet structure. The sequence is that of Class I hydrophobin 18 from Pleurotus ostreatus (strain PC15) (Oyster mushroom).